The following is an 825-amino-acid chain: Arabinolytic transcriptional activator araR (825 aa).

Polar residues predominate over residues 1–17 (MASSHQGNGTVPNSQTD). The segment at 1-28 (MASSHQGNGTVPNSQTDAPPDSSTKRRW) is disordered. The zn(2)-C6 fungal-type DNA-binding region spans 35–61 (CDSCHARRVRCDRQFPCSRCLRSEITC). Residues 117 to 152 (STFHHRSPPANAPTVSAPSVDGRRSQTDPQLPVRRP) are disordered.

It belongs to the xlnR/xlr1 family. araR subfamily.

The protein localises to the nucleus. Functionally, transcriptional activator of the arabinanolytic system. Involved in the regulation of extracellular arabinanolytic genes and in the regulation of the intracellular activities of L-arabinose catabolic genes in the pentose catabolic pathway (PCP) in response to the presence of L-arabinose. The protein is Arabinolytic transcriptional activator araR of Emericella nidulans (strain FGSC A4 / ATCC 38163 / CBS 112.46 / NRRL 194 / M139) (Aspergillus nidulans).